The sequence spans 855 residues: Cytosolic phospholipase A2 zeta (855 aa).

The 119-residue stretch at glutamate 27–phenylalanine 145 folds into the C2 domain. Residues aspartate 60, aspartate 66, aspartate 116, aspartate 118, and aspartate 123 each coordinate Ca(2+). Residues methionine 304–glycine 855 form the PLA2c domain. Serine 393 serves as the catalytic Nucleophile. Aspartate 685 acts as the Proton acceptor in catalysis.

Ca(2+) serves as cofactor. As to expression, strongly expressed in thyroid, expressed at intermediate level in stomach and at very low level in large intestine and prostate.

It localises to the cytoplasm. The protein localises to the cytosol. It is found in the cell membrane. The protein resides in the mitochondrion. It catalyses the reaction a 1,2-diacyl-sn-glycero-3-phosphocholine + H2O = a 1-acyl-sn-glycero-3-phosphocholine + a fatty acid + H(+). It carries out the reaction a 1-O-alkyl-2-acyl-sn-glycero-3-phosphocholine + H2O = a 1-O-alkyl-sn-glycero-3-phosphocholine + a fatty acid + H(+). The catalysed reaction is 1-hexadecanoyl-2-(9Z-octadecenoyl)-sn-glycero-3-phosphocholine + H2O = 2-(9Z-octadecenoyl)-sn-glycero-3-phosphocholine + hexadecanoate + H(+). The enzyme catalyses 1-hexadecanoyl-2-(9Z,12Z-octadecadienoyl)-sn-glycero-3-phosphocholine + H2O = (9Z,12Z)-octadecadienoate + 1-hexadecanoyl-sn-glycero-3-phosphocholine + H(+). It catalyses the reaction 1-hexadecanoyl-2-(5Z,8Z,11Z,14Z-eicosatetraenoyl)-sn-glycero-3-phosphocholine + H2O = 1-hexadecanoyl-sn-glycero-3-phosphocholine + (5Z,8Z,11Z,14Z)-eicosatetraenoate + H(+). It carries out the reaction 1-hexadecanoyl-2-(9Z,12Z-octadecadienoyl)-sn-glycero-3-phosphoethanolamine + H2O = 1-hexadecanoyl-sn-glycero-3-phosphoethanolamine + (9Z,12Z)-octadecadienoate + H(+). The catalysed reaction is 1-hexadecanoyl-2-(5Z,8Z,11Z,14Z-eicosatetraenoyl)-sn-glycero-3-phosphoethanolamine + H2O = 1-hexadecanoyl-sn-glycero-3-phosphoethanolamine + (5Z,8Z,11Z,14Z)-eicosatetraenoate + H(+). The enzyme catalyses 1-(5Z,8Z,11Z,14Z-eicosatetraenoyl)-2-O-hexadecyl-sn-glycero-3-phosphocholine + H2O = 2-O-hexadecyl-sn-glycero-3-phosphocholine + (5Z,8Z,11Z,14Z)-eicosatetraenoate + H(+). It catalyses the reaction 1-O-hexadecyl-2-(5Z,8Z,11Z,14Z)-eicosatetraenoyl-sn-glycero-3-phosphocholine + H2O = 1-O-hexadecyl-sn-glycero-3-phosphocholine + (5Z,8Z,11Z,14Z)-eicosatetraenoate + H(+). It carries out the reaction 1-hexadecanoyl-sn-glycero-3-phosphocholine + H2O = sn-glycerol 3-phosphocholine + hexadecanoate + H(+). With respect to regulation, stimulated by cytosolic Ca(2+). Functionally, has calcium-dependent phospholipase and lysophospholipase activities with a potential role in membrane lipid remodeling and biosynthesis of lipid mediators. Preferentially hydrolyzes the ester bond of the fatty acyl group attached at sn-2 position of phospholipids (phospholipase A2 activity). Selectively hydrolyzes sn-2 arachidonoyl group from membrane phospholipids, providing the precursor for eicosanoid biosynthesis. In myocardial mitochondria, plays a major role in arachidonate release that is metabolically channeled to the formation of cardioprotective eicosanoids, epoxyeicosatrienoates (EETs). This is Cytosolic phospholipase A2 zeta (Pla2g4f) from Mus musculus (Mouse).